Reading from the N-terminus, the 132-residue chain is uncharacterized protein (132 aa).

The disordered stretch occupies residues 17–75; the sequence is RSAVPRWPHLSSQSGVEPPDRWTGTPGWPSRDQEAPGSMMPPAAAQPSAHGALVPPATA. A compositionally biased stretch (low complexity) spans 51-65; sequence APGSMMPPAAAQPSA.

In terms of tissue distribution, expressed exclusively in heart.

Its subcellular location is the cytoplasm. This is an uncharacterized protein from Homo sapiens (Human).